The following is a 485-amino-acid chain: MPATETADKNTKSANSDTSGRVVRVTGPVVDVEFPRGSVPDLFNALHAEITFEELAKTLTLEVAQHLGDNLVRTMSLQPTDGLVRGVEVIDTGRSISVPVGQEVKGHVFNALGHCLDKPGYGEDFEHWSIHRKPPPFEELEPRTEMLETGLKVVDLLTPYVRGGKIALFGGAGVGKTVLIQEMINRIARNFGGTSVFAGVGERTREGNDLWVELQEANVLKDTALVFGQMDEPPGTRMRVALSALTMAEWFRDEAGQDVLLFIDNIFRFTQAGSEVSTLLGRMPSAVGYQPTLADEMGELQERITSTRGRSITSMQAVYVPADDYTDPAPATTFAHLDATTELSRSVFSKGIFPAVDPLASSSTILDPGVVGEEHYRVAQEVIRILQRYKDLQDIIAILGIDELSEEDKQLVNRARRIERFLSQNMMAAEQFTGQPGSTVPLKETIEAFDRLTKGEFDHVPEQAFFLIGGLDDLAKKAESLGAKL.

The segment covering 1–11 (MPATETADKNT) has biased composition (basic and acidic residues). A disordered region spans residues 1–20 (MPATETADKNTKSANSDTSG). Residue 170–177 (GGAGVGKT) coordinates ATP.

Belongs to the ATPase alpha/beta chains family. In terms of assembly, F-type ATPases have 2 components, CF(1) - the catalytic core - and CF(0) - the membrane proton channel. CF(1) has five subunits: alpha(3), beta(3), gamma(1), delta(1), epsilon(1). CF(0) has three main subunits: a(1), b(2) and c(9-12). The alpha and beta chains form an alternating ring which encloses part of the gamma chain. CF(1) is attached to CF(0) by a central stalk formed by the gamma and epsilon chains, while a peripheral stalk is formed by the delta and b chains.

The protein resides in the cell membrane. It catalyses the reaction ATP + H2O + 4 H(+)(in) = ADP + phosphate + 5 H(+)(out). Its function is as follows. Produces ATP from ADP in the presence of a proton gradient across the membrane. The catalytic sites are hosted primarily by the beta subunits. This chain is ATP synthase subunit beta, found in Mycolicibacterium paratuberculosis (strain ATCC BAA-968 / K-10) (Mycobacterium paratuberculosis).